The primary structure comprises 124 residues: Membrane-anchored ubiquitin-fold protein 2 (124 aa).

The 67-residue stretch at 8–74 (LEIKFRLNDG…LENNKTVGDC (67 aa)) folds into the Ubiquitin-like domain. S-palmitoyl cysteine attachment occurs at residues Cys115, Cys117, Cys119, and Cys124.

In terms of processing, acylated protein. Probably modified with palmitate. In terms of tissue distribution, ubiquitous, but three fold higher expression in stamens.

It is found in the cell membrane. May serve as docking site to facilitate the association of other proteins to the plasma membrane. This chain is Membrane-anchored ubiquitin-fold protein 2 (MUB2), found in Arabidopsis thaliana (Mouse-ear cress).